The chain runs to 425 residues: NAC transcription factor ONAC010 (425 aa).

Positions 1 to 10 are enriched in polar residues; that stretch reads MESPDSSSGS. The tract at residues 1 to 34 is disordered; the sequence is MESPDSSSGSAPPRVLRRQQQQPGSAPELPPGFR. Over residues 12–23 the composition is skewed to low complexity; sequence PPRVLRRQQQQP. Residues 29-200 enclose the NAC domain; that stretch reads LPPGFRFHPT…DWVLCRIYKK (172 aa). Residues 129 to 206 mediate DNA binding; it reads VGVKKALVFY…IYKKTNKAGA (78 aa).

It is found in the nucleus. Functionally, transcription factor of the NAC family associated with male fertility. The chain is NAC transcription factor ONAC010 (ONAC010) from Oryza sativa subsp. indica (Rice).